The sequence spans 110 residues: Insulin (110 aa).

An N-terminal signal peptide occupies residues 1-24 (MASLAALLPLLALLVLCRLDPAQA). 3 disulfide bridges follow: Cys-31–Cys-96, Cys-43–Cys-109, and Cys-95–Cys-100. Positions 57-87 (EVEELQVGQAELGGGPGAGGLQPSALELALQ) are cleaved as a propeptide — c peptide.

Belongs to the insulin family. In terms of assembly, heterodimer of a B chain and an A chain linked by two disulfide bonds.

Its subcellular location is the secreted. Insulin decreases blood glucose concentration. It increases cell permeability to monosaccharides, amino acids and fatty acids. It accelerates glycolysis, the pentose phosphate cycle, and glycogen synthesis in liver. In Oryctolagus cuniculus (Rabbit), this protein is Insulin (INS).